Consider the following 477-residue polypeptide: MRLLKSHPLLKLVNSYLIDASQPSNISYLWNFGSLLACCLIIQIVTGVTLAMHYSPNVLEAFNSIEHIMRDVNNGWLVRYLHSNTASAFFFLVYLHIGRGMYYGSYRAPRTLVWAIGTVILILMMATAFLGYVLPYGQMSLWGATVITNLISAIPWIGQDIVESKIITLIINLSFIAILFSIVVVYYYILLHVNFSSNLPTIGVIHQNALKKSNKALRLDKQEYISIPSSFLAFLAGLVDGDGYIQVTKTSKGFIAIKLVISLHLEDLSILEYIHSVLKIGKINIYKDLRSPTCKLVINKTDLQEILFPLLMYNKIFFLTNTRADQFNLAMYIFKNDIKMYNQIPDNTPAVFEIPKNPIDYTLLPFFKNWIVGFTCSEGSFFIKSNNDGCFQLKQRIHTNLFEAFKLMFNTNRKIDTTNNFNQFGVSSKSDIQKVINFFSFSGLHPLVGLKYIQYIKWLNNLRESLRYSTLNYPDAK.

The tract at residues M1–E163 is cytochrome b. The next 5 helical transmembrane spans lie at F32–M52, A86–Y106, V113–V133, W142–V162, and I166–Y186. Positions S164–K477 are maturase.

In the N-terminal section; belongs to the cytochrome b family. The protein in the C-terminal section; belongs to the LAGLIDADG endonuclease family.

The protein resides in the mitochondrion inner membrane. In terms of biological role, mitochondrial mRNA maturase required for splicing of intron 3 of the cytochrome b (cob) gene, containing its own coding sequence. The chain is Cytochrome b mRNA maturase bI3 (bI3) from Neurospora crassa (strain ATCC 24698 / 74-OR23-1A / CBS 708.71 / DSM 1257 / FGSC 987).